A 140-amino-acid chain; its full sequence is Extracellular globin-1 (140 aa).

Positions 1–140 constitute a Globin domain; that stretch reads ECDVLERFKV…YDFIASGIKP (140 aa). Cys-2 and Cys-130 are oxidised to a cystine. His-93 is a binding site for heme b.

It belongs to the globin family. As to quaternary structure, the giant hemoglobins of worms are formed of a monomeric subunit and a disulfide-bonded trimer. This subunit is monomeric.

The protein resides in the secreted. This is Extracellular globin-1 from Metaphire hilgendorfi (Earthworm).